A 219-amino-acid polypeptide reads, in one-letter code: uncharacterized protein (219 aa).

This is an uncharacterized protein from Acanthamoeba polyphaga mimivirus (APMV).